The chain runs to 735 residues: Probable E3 ubiquitin-protein ligase MID2 (735 aa).

The segment at 30-80 (CPICLELFEDPLLLPCAHSLCFSCAHRILVSSCSSGESIEPITAFQCPTCR) adopts an RING-type zinc-finger fold. The B box-type 1; degenerate zinc finger occupies 137-184 (IACQFCEQDPPRDAVKTCITCEVSYCDRCLRATHPNKKPFTSHRLVEP). The B box-type 2 zinc-finger motif lies at 190–232 (LRGITCLDHENEKVNMYCVSDDQLICALCKLVGRHRDHQVASL). Zn(2+)-binding residues include Cys195, His198, Cys218, and His224. Residues 233–301 (NDRFEKLKQT…IIQQRKQMIA (69 aa)) are a coiled coil. The COS domain maps to 340–399 (LKENDQARFLQSAKNIAERVAMATASSQVLIPDINFNDAFENFALDFSREKKLLEGLDYL). The Fibronectin type-III domain maps to 398–531 (YLTAPNPPSI…RNSEPTRLKT (134 aa)). One can recognise a B30.2/SPRY domain in the interval 516–709 (INQAGSRNSE…ILSGLPAPDF (194 aa)).

This sequence belongs to the TRIM/RBCC family. In terms of assembly, homodimer or heterodimer with MID1. Interacts with IGBP1. Post-translationally, phosphorylated on serine and threonine residues. As to expression, low level in fetal kidney and lung, and in adult prostate, ovary and small intestine.

The protein localises to the cytoplasm. It localises to the cytoskeleton. It carries out the reaction S-ubiquitinyl-[E2 ubiquitin-conjugating enzyme]-L-cysteine + [acceptor protein]-L-lysine = [E2 ubiquitin-conjugating enzyme]-L-cysteine + N(6)-ubiquitinyl-[acceptor protein]-L-lysine.. It participates in protein modification; protein ubiquitination. Functionally, E3 ubiquitin ligase that plays a role in microtubule stabilization. Mediates the 'Lys-48'-linked polyubiquitination of LRRK2 to drive its localization to microtubules and its proteasomal degradation in neurons. This ubiquitination inhibits LRRK2 kinase activation by RAB29. This is Probable E3 ubiquitin-protein ligase MID2 (MID2) from Homo sapiens (Human).